Consider the following 323-residue polypeptide: Syntaxin-42 (323 aa).

Residues 1-302 lie on the Cytoplasmic side of the membrane; it reads MATRNRTTVY…QREGAMVKCA (302 aa). The 63-residue stretch at 227–289 folds into the t-SNARE coiled-coil homology domain; that stretch reads QHVSAERERE…EEGYKQLQKA (63 aa). A helical; Anchor for type IV membrane protein transmembrane segment spans residues 303–323; the sequence is TILLVLCLIMIVLLILKNILF.

This sequence belongs to the syntaxin family. As to quaternary structure, interacts with VTI12 and SYP61 to form a t-SNARE complex and with VPS45. Expressed at low levels in roots, stems, flowers and leaves.

It localises to the golgi apparatus. The protein localises to the trans-Golgi network membrane. In terms of biological role, contributes to the regulation of secretory and vacuolar transport pathways in the post-Golgi network, and to the maintenance of the Golgi apparatus and trans-Golgi network (TGN) morphologies. Vesicle trafficking protein that functions in the secretory pathway and mediates liposome fusion. Required for extracellular resistance responses to a fungal pathogen. Also involved in the protection of chloroplasts from salicylic acid-dependent biotic stress. The chain is Syntaxin-42 from Arabidopsis thaliana (Mouse-ear cress).